Reading from the N-terminus, the 102-residue chain is MARQKIRIRLKAFDHRVLDQSSQKIVDTARRTGAVVSGPIPLPTEKNIFTILRSPHVNKDSREQFEMRTHKRLIDILEPTPKTVDALMRLDLPAGVDIEIKL.

This sequence belongs to the universal ribosomal protein uS10 family. As to quaternary structure, part of the 30S ribosomal subunit.

Its function is as follows. Involved in the binding of tRNA to the ribosomes. This chain is Small ribosomal subunit protein uS10, found in Moorella thermoacetica (strain ATCC 39073 / JCM 9320).